The following is a 74-amino-acid chain: uncharacterized protein (74 aa).

2 disordered regions span residues 1 to 26 (MNGP…SGVF) and 46 to 74 (ITNS…SFTQ). Residues 34-50 (VSNKSIMLISLKITNSP) traverse the membrane as a helical segment. Residues 47 to 74 (TNSPNSNSRGSSSSSSTSKSSSKTSFTQ) are compositionally biased toward low complexity.

It localises to the membrane. This is an uncharacterized protein from Dictyostelium discoideum (Social amoeba).